Consider the following 360-residue polypeptide: (+)-6a-hydroxymaackiain 3-O-methyltransferase 1 (360 aa).

Residues 202–205 (VAGG), D226, 226–227 (DQ), 246–247 (DM), and K260 each bind S-adenosyl-L-methionine. H264 acts as the Proton acceptor in catalysis.

This sequence belongs to the class I-like SAM-binding methyltransferase superfamily. Cation-independent O-methyltransferase family. COMT subfamily.

The enzyme catalyses (+)-6a-hydroxymaackiain + S-adenosyl-L-methionine = (+)-pisatin + S-adenosyl-L-homocysteine + H(+). It carries out the reaction a 4'-hydroxyisoflavone + S-adenosyl-L-methionine = a 4'-methoxyisoflavone + S-adenosyl-L-homocysteine + H(+). Functionally, methyltransferase involved in the phytoalexin pisatin biosynthesis. Has both 3- and 4'-O-methyltransferase activities. Can use (+)-6a-hydroxymaackiain, 2,7,4'-trihydroxyisoflavanone and with much less activity (+)-medicarpin as substrates, but not (-)-6a-hydroxymaackiain, daidzein, formononetin or isoliquiritigenin. May be involved in formononetin biosynthesis. The sequence is that of (+)-6a-hydroxymaackiain 3-O-methyltransferase 1 (HMM1) from Pisum sativum (Garden pea).